The primary structure comprises 419 residues: uncharacterized protein (419 aa).

The 208-residue stretch at 29 to 236 (PKFQDKIRIR…KLIELELKTI (208 aa)) folds into the Obg domain. Residues 237 to 414 (CEIGLVGLPN…LVRGMTQLLQ (178 aa)) enclose the OBG-type G domain. GTP-binding positions include 243-250 (GLPNAGKS), 295-299 (DIPGI), and 364-367 (ANKA).

Belongs to the TRAFAC class OBG-HflX-like GTPase superfamily. OBG GTPase family.

The protein resides in the mitochondrion. This is an uncharacterized protein from Schizosaccharomyces pombe (strain 972 / ATCC 24843) (Fission yeast).